The sequence spans 350 residues: Transmembrane protein 185A (350 aa).

7 helical membrane passes run 16–36, 41–61, 81–101, 111–131, 177–197, 211–231, and 240–260; these read LIYA…DGII, WAVF…ASVG, FKAM…EVLV, FWLL…AACV, ILMS…VLFL, ITMA…EILL, and AFSC…LMAT. The segment at 298 to 350 is mediates interaction with MAP1B; the sequence is DLHHEDSEETEETPVPEPPKIAPMFRKKARVVITQSPGKYVLPPPKLNIEMPD.

Belongs to the TMEM185 family. Interacts with MAP1B. As to expression, broadly expressed in brain where it is specifically expressed by neurons (at protein level). Also detected in some cells of arterioles, intestine, lung and testis (at protein level).

It localises to the cell projection. Its subcellular location is the dendrite. It is found in the membrane. This Mus musculus (Mouse) protein is Transmembrane protein 185A (Tmem185a).